A 23-amino-acid chain; its full sequence is Paralytic peptide 2 (23 aa).

A disulfide bridge connects residues Cys7 and Cys19.

The protein belongs to the GBP/PSP1/paralytic peptide family. As to expression, hemolymph.

Its function is as follows. Causes rapid, rigid paralysis when injected into Lepidopteran larvae. The physiological role may be to reduce hemolymph loss following injury and promote wound healing. This chain is Paralytic peptide 2, found in Spodoptera exigua (Beet armyworm).